The sequence spans 456 residues: Bifunctional protein GlmU (456 aa).

Positions 1–229 (MTKKALSAVI…VMEVEGANNR (229 aa)) are pyrophosphorylase. Residues 11–14 (LAAG), Lys-25, Gln-76, 81–82 (GT), 103–105 (YGD), Gly-140, Glu-154, Asn-169, and Asn-227 each bind UDP-N-acetyl-alpha-D-glucosamine. Mg(2+) is bound at residue Asp-105. Residue Asn-227 coordinates Mg(2+). Positions 230 to 250 (LQLAALERYFQNKQASKLLLE) are linker. The N-acetyltransferase stretch occupies residues 251-456 (GVMIYDPARF…QGWQRPIKKK (206 aa)). Arg-333 and Lys-351 together coordinate UDP-N-acetyl-alpha-D-glucosamine. The active-site Proton acceptor is His-363. The UDP-N-acetyl-alpha-D-glucosamine site is built by Tyr-366 and Asn-377. Residues Ala-380, 386-387 (NY), Ser-405, Ala-423, and Arg-440 contribute to the acetyl-CoA site.

In the N-terminal section; belongs to the N-acetylglucosamine-1-phosphate uridyltransferase family. This sequence in the C-terminal section; belongs to the transferase hexapeptide repeat family. In terms of assembly, homotrimer. Mg(2+) serves as cofactor.

The protein localises to the cytoplasm. It carries out the reaction alpha-D-glucosamine 1-phosphate + acetyl-CoA = N-acetyl-alpha-D-glucosamine 1-phosphate + CoA + H(+). It catalyses the reaction N-acetyl-alpha-D-glucosamine 1-phosphate + UTP + H(+) = UDP-N-acetyl-alpha-D-glucosamine + diphosphate. Its pathway is nucleotide-sugar biosynthesis; UDP-N-acetyl-alpha-D-glucosamine biosynthesis; N-acetyl-alpha-D-glucosamine 1-phosphate from alpha-D-glucosamine 6-phosphate (route II): step 2/2. It functions in the pathway nucleotide-sugar biosynthesis; UDP-N-acetyl-alpha-D-glucosamine biosynthesis; UDP-N-acetyl-alpha-D-glucosamine from N-acetyl-alpha-D-glucosamine 1-phosphate: step 1/1. The protein operates within bacterial outer membrane biogenesis; LPS lipid A biosynthesis. In terms of biological role, catalyzes the last two sequential reactions in the de novo biosynthetic pathway for UDP-N-acetylglucosamine (UDP-GlcNAc). The C-terminal domain catalyzes the transfer of acetyl group from acetyl coenzyme A to glucosamine-1-phosphate (GlcN-1-P) to produce N-acetylglucosamine-1-phosphate (GlcNAc-1-P), which is converted into UDP-GlcNAc by the transfer of uridine 5-monophosphate (from uridine 5-triphosphate), a reaction catalyzed by the N-terminal domain. The polypeptide is Bifunctional protein GlmU (Haemophilus influenzae (strain ATCC 51907 / DSM 11121 / KW20 / Rd)).